A 928-amino-acid polypeptide reads, in one-letter code: Kinesin heavy chain (928 aa).

The region spanning 7-330 is the Kinesin motor domain; it reads SIKVVARFRP…LRFGMRAKSI (324 aa). Residues 88 to 95 and 238 to 245 each bind ATP; these read GQTGAGKS and GSEKVGKT. The stretch at 343-866 forms a coiled coil; it reads AELKQMLAKA…VKDRLEAAKA (524 aa). A compositionally biased stretch (low complexity) spans 395–409; sequence SKSASTTARPSTPSR. Disordered stretches follow at residues 395-434 and 893-928; these read SKSA…PLDK and GGGD…FQKS. Positions 905-928 are enriched in polar residues; sequence NPTIATLQQNPPENKRSSWFFQKS.

Belongs to the TRAFAC class myosin-kinesin ATPase superfamily. Kinesin family. Kinesin subfamily.

The protein localises to the cytoplasm. It localises to the cytoskeleton. In terms of biological role, kinesin is a microtubule-associated force-producing protein that may play a role in organelle transport. Its motor activity is directed toward the microtubule's plus end. In Neurospora crassa (strain ATCC 24698 / 74-OR23-1A / CBS 708.71 / DSM 1257 / FGSC 987), this protein is Kinesin heavy chain (kin).